Here is a 284-residue protein sequence, read N- to C-terminus: L-ribulose-5-phosphate 3-epimerase UlaE (284 aa).

The protein belongs to the L-ribulose-5-phosphate 3-epimerase family.

It carries out the reaction L-ribulose 5-phosphate = L-xylulose 5-phosphate. It participates in cofactor degradation; L-ascorbate degradation; D-xylulose 5-phosphate from L-ascorbate: step 3/4. Functionally, catalyzes the isomerization of L-xylulose-5-phosphate to L-ribulose-5-phosphate. Is involved in the anaerobic L-ascorbate utilization. The protein is L-ribulose-5-phosphate 3-epimerase UlaE of Escherichia coli (strain SMS-3-5 / SECEC).